Reading from the N-terminus, the 229-residue chain is Large ribosomal subunit protein uL1 (229 aa).

This sequence belongs to the universal ribosomal protein uL1 family. As to quaternary structure, part of the 50S ribosomal subunit.

Binds directly to 23S rRNA. The L1 stalk is quite mobile in the ribosome, and is involved in E site tRNA release. Its function is as follows. Protein L1 is also a translational repressor protein, it controls the translation of the L11 operon by binding to its mRNA. This is Large ribosomal subunit protein uL1 from Flavobacterium johnsoniae (strain ATCC 17061 / DSM 2064 / JCM 8514 / BCRC 14874 / CCUG 350202 / NBRC 14942 / NCIMB 11054 / UW101) (Cytophaga johnsonae).